Here is a 302-residue protein sequence, read N- to C-terminus: Homoserine O-acetyltransferase (302 aa).

Catalysis depends on cysteine 142, which acts as the Acyl-thioester intermediate. Substrate contacts are provided by lysine 163 and serine 192. The active-site Proton acceptor is histidine 235. Glutamate 237 is an active-site residue. Residue arginine 249 participates in substrate binding.

This sequence belongs to the MetA family.

The protein resides in the cytoplasm. It catalyses the reaction L-homoserine + acetyl-CoA = O-acetyl-L-homoserine + CoA. Its pathway is amino-acid biosynthesis; L-methionine biosynthesis via de novo pathway; O-acetyl-L-homoserine from L-homoserine: step 1/1. Functionally, transfers an acetyl group from acetyl-CoA to L-homoserine, forming acetyl-L-homoserine. The protein is Homoserine O-acetyltransferase of Geobacillus kaustophilus.